A 205-amino-acid polypeptide reads, in one-letter code: Protein GrpE (205 aa).

The segment at 1–40 (MSRKLHEEELTPEGMDAAQNADPAGDPVSENEGALPAAEP) is disordered.

Belongs to the GrpE family. Homodimer.

The protein resides in the cytoplasm. In terms of biological role, participates actively in the response to hyperosmotic and heat shock by preventing the aggregation of stress-denatured proteins, in association with DnaK and GrpE. It is the nucleotide exchange factor for DnaK and may function as a thermosensor. Unfolded proteins bind initially to DnaJ; upon interaction with the DnaJ-bound protein, DnaK hydrolyzes its bound ATP, resulting in the formation of a stable complex. GrpE releases ADP from DnaK; ATP binding to DnaK triggers the release of the substrate protein, thus completing the reaction cycle. Several rounds of ATP-dependent interactions between DnaJ, DnaK and GrpE are required for fully efficient folding. The chain is Protein GrpE from Acidobacterium capsulatum (strain ATCC 51196 / DSM 11244 / BCRC 80197 / JCM 7670 / NBRC 15755 / NCIMB 13165 / 161).